The primary structure comprises 365 residues: Serine/threonine-protein phosphatase 2A activator 1 (365 aa).

Residues 321–349 (YEAPSETSEKPAAGTAHTTTTTMPPPRMT) form a disordered region. Over residues 331–342 (PAAGTAHTTTTT) the composition is skewed to low complexity.

This sequence belongs to the PTPA-type PPIase family.

Its subcellular location is the cytoplasm. It localises to the nucleus. The enzyme catalyses [protein]-peptidylproline (omega=180) = [protein]-peptidylproline (omega=0). Functionally, PPIases accelerate the folding of proteins. It catalyzes the cis-trans isomerization of proline imidic peptide bonds in oligopeptides. Acts as a regulatory subunit for PP2A-like phosphatases modulating their activity or substrate specificity, probably by inducing a conformational change in the catalytic subunit, a direct target of the PPIase. Can reactivate inactive phosphatase PP2A-phosphatase methylesterase complexes (PP2Ai) in presence of ATP and Mg(2+) by dissociating the inactive form from the complex. This chain is Serine/threonine-protein phosphatase 2A activator 1 (RRD1), found in Eremothecium gossypii (strain ATCC 10895 / CBS 109.51 / FGSC 9923 / NRRL Y-1056) (Yeast).